Consider the following 88-residue polypeptide: MVKLRLKRCGRKQRAVYRIVAIDVRSRREGRDLRKVGFYDPITNQTYLNLPAILDFLKKGAQPTRTVHDISKKAGIFTELNLNKTKLN.

The protein belongs to the bacterial ribosomal protein bS16 family.

The protein resides in the plastid. The protein localises to the chloroplast. This is Small ribosomal subunit protein bS16c from Sinapis alba (White mustard).